Here is a 35-residue protein sequence, read N- to C-terminus: Ranatuerin-2SPa (35 aa).

Cysteines 28 and 33 form a disulfide.

As to expression, expressed by the skin glands.

The protein resides in the secreted. Antibacterial activity against Gram-positive bacterium S.aureus. Shows no detectable hemolytic activity towards human erythrocytes. The protein is Ranatuerin-2SPa of Lithobates septentrionalis (Mink frog).